Here is a 121-residue protein sequence, read N- to C-terminus: Amelogenin (121 aa).

Disordered stretches follow at residues 1 to 20 (LHHQ…HALQ) and 32 to 121 (QPMQ…WPAT). Over residues 48 to 58 (SVTPTQHHQSN) the composition is skewed to polar residues. The segment covering 59–71 (LPQPAQQPFQPQV) has biased composition (low complexity). The segment covering 85-111 (PAHPMPPMPQPPLPPMFPMQPLPPLLP) has biased composition (pro residues).

Belongs to the amelogenin family.

Its subcellular location is the secreted. The protein localises to the extracellular space. It is found in the extracellular matrix. Plays a role in the biomineralization of teeth. Seems to regulate the formation of crystallites during the secretory stage of tooth enamel development. Thought to play a major role in the structural organization and mineralization of developing enamel. This Ornithorhynchus anatinus (Duckbill platypus) protein is Amelogenin (AMEL).